The primary structure comprises 356 residues: MSRFWSPLVHKLTPYVPGEQPKMTDLIKLNTNESPYGPSPRALEAIRAADNDTLRLYPDPEALALRKALGARIGLGPEYVFVGNGSDEVLAHAFQAFFAHGEPLLFPDVTYSFYKVYCGLYSLPFRNVPLTDDMQVNVADYAGPCSGVVVANPNAPTGIALDLADVRKLLELQPNRVVLIDEAYVDFGAESAVSLIKEYPNLLVVQTFSKSRALAGLRVGFAFGQPELIEGLVRIKDSFNSYPLDRLAQVGATAAVEDEAWLATSVQKVMASRTVLTEGLQKLGFDVLPSKANFVYTRHPNRNAAELATQLRERAIIVRHLRGERTAAWLRITVGTDQQCETLLSALRDILCSNSL.

At Lys-210 the chain carries N6-(pyridoxal phosphate)lysine.

Belongs to the class-II pyridoxal-phosphate-dependent aminotransferase family. Histidinol-phosphate aminotransferase subfamily. As to quaternary structure, homodimer. It depends on pyridoxal 5'-phosphate as a cofactor.

The enzyme catalyses L-histidinol phosphate + 2-oxoglutarate = 3-(imidazol-4-yl)-2-oxopropyl phosphate + L-glutamate. Its pathway is amino-acid biosynthesis; L-histidine biosynthesis; L-histidine from 5-phospho-alpha-D-ribose 1-diphosphate: step 7/9. This chain is Histidinol-phosphate aminotransferase (hisC), found in Acetobacter pasteurianus (Acetobacter turbidans).